We begin with the raw amino-acid sequence, 1555 residues long: Phospholipid-transporting ATPase DNF1 (1555 aa).

Positions 1 to 85 (MAPPQEEGGG…SSNNGGSAPR (85 aa)) are disordered. Over 1-134 (MAPPQEEGGG…PKNLWFQFHN (134 aa)) the chain is Cytoplasmic. The span at 22–37 (WATRRLTVKSGARKRL) shows a compositional bias: basic residues. Positions 72–82 (GSISSSNNGGS) are enriched in low complexity. Residues 135-155 (IANIFFLFLVILVIFPIFGGV) form a helical membrane-spanning segment. Residue N156 is a topological domain, extracellular. A helical transmembrane segment spans residues 157–177 (PGLNSVPLIVIITVTAIKDAI). Residues 178-491 (EDYRRTILDI…ARIARELNFN (314 aa)) lie on the Cytoplasmic side of the membrane. The disordered stretch occupies residues 257 to 288 (TRTAPWDPSHRRSVASHTEEIQMTPVPSPVPH). Residues 492–512 (VICNFGILLIMCLIAAIANGI) form a helical membrane-spanning segment. Over 513-537 (AWGKTDASLAWFEYGSIGGTPALTG) the chain is Extracellular. Residues 538 to 558 (FITFWAAVIVFQNLVPISLYI) traverse the membrane as a helical segment. The Cytoplasmic segment spans residues 559–1123 (SLEIVRTLQA…TISNFFYKNM (565 aa)). Catalysis depends on D606, which acts as the 4-aspartylphosphate intermediate. ATP-binding residues include D606, K607, T608, E740, F781, S783, K786, K804, R839, T840, T919, G920, D921, R1031, and K1037. Residue D606 participates in Mg(2+) binding. Residue T608 coordinates Mg(2+). D1057 contacts Mg(2+). 2 residues coordinate ATP: N1060 and D1061. D1061 serves as a coordination point for Mg(2+). Residues 1124 to 1144 (IWTWSIFWYQCYCNFDIAYIF) form a helical membrane-spanning segment. Residues 1145–1146 (EY) lie on the Extracellular side of the membrane. The chain crosses the membrane as a helical span at residues 1147-1167 (TYILMFNLFFTSVPVILMGVL). Residues 1168 to 1200 (DQDVSDTVSLAVPQLYRRGIERKEWTQTKFWLY) lie on the Cytoplasmic side of the membrane. Residues 1201–1221 (MIDGVYQSVMSFFIPFIFVVL) traverse the membrane as a helical segment. Residues 1222-1237 (TPTAAGNGLDVSERTR) lie on the Extracellular side of the membrane. The helical transmembrane segment at 1238–1258 (LGAYIAHPAVITINGYILINT) threads the bilayer. Topologically, residues 1259–1262 (YRWD) are cytoplasmic. The chain crosses the membrane as a helical span at residues 1263–1283 (WLMLLSIVLSDVFIFFWTGVY). Residues 1284-1302 (TATTYSAGFYQAAPQVYQE) are Extracellular-facing. A helical transmembrane segment spans residues 1303–1323 (LTFWMCLIVTPALCLLPRLVV). R1320 serves as a coordination point for a 1,2-diacyl-sn-glycero-3-phospho-L-serine. The Cytoplasmic segment spans residues 1324-1555 (KCIQKQRFPY…EGEPPREPPM (232 aa)). 2 disordered regions span residues 1364 to 1456 (VEGE…ERTR) and 1489 to 1555 (ESTH…EPPM). Residues 1406–1432 (ATHNTRAQNGSDGTTYIMQSRTSTELQ) are compositionally biased toward polar residues. 2 stretches are compositionally biased toward basic and acidic residues: residues 1436-1456 (PFDR…ERTR) and 1540-1555 (KSID…EPPM).

It belongs to the cation transport ATPase (P-type) (TC 3.A.3) family. Type IV subfamily. As to quaternary structure, component of a flippase complex consisting of DNF1 and CDC50. Interacts with CDC50; the interaction is direct. It depends on Mg(2+) as a cofactor.

The protein resides in the cell membrane. It localises to the endosome membrane. It is found in the golgi apparatus. Its subcellular location is the trans-Golgi network membrane. It carries out the reaction ATP + H2O + phospholipidSide 1 = ADP + phosphate + phospholipidSide 2.. The enzyme catalyses a 1,2-diacyl-sn-glycero-3-phosphoethanolamine(out) + ATP + H2O = a 1,2-diacyl-sn-glycero-3-phosphoethanolamine(in) + ADP + phosphate + H(+). The catalysed reaction is a 1,2-diacyl-sn-glycero-3-phosphocholine(out) + ATP + H2O = a 1,2-diacyl-sn-glycero-3-phosphocholine(in) + ADP + phosphate + H(+). It catalyses the reaction a beta-D-glucosyl-(1&lt;-&gt;1')-N-acylsphing-4-enine(out) + ATP + H2O = a beta-D-glucosyl-(1&lt;-&gt;1')-N-acylsphing-4-enine(in) + ADP + phosphate + H(+). It carries out the reaction a 1,2-diacyl-sn-glycero-3-phospho-L-serine(out) + ATP + H2O = a 1,2-diacyl-sn-glycero-3-phospho-L-serine(in) + ADP + phosphate + H(+). Its function is as follows. Catalytic component of a P4-ATPase flippase complex which catalyzes the hydrolysis of ATP coupled to the transport of phosphatidylcholine and phosphatidylserine from the lumenal to the cytosolic leaflet of membranes and ensures the maintenance of asymmetric distribution of phospholipids. May also transport glucosylceramide and phosphatidylethanolamine. The sequence is that of Phospholipid-transporting ATPase DNF1 from Chaetomium thermophilum (strain DSM 1495 / CBS 144.50 / IMI 039719) (Thermochaetoides thermophila).